Here is a 66-residue protein sequence, read N- to C-terminus: Large ribosomal subunit protein bL35 (66 aa).

The segment covering 1 to 16 (MPKQKTHRASAKRFKR) has biased composition (basic residues). The interval 1–21 (MPKQKTHRASAKRFKRTGSGG) is disordered.

It belongs to the bacterial ribosomal protein bL35 family.

This is Large ribosomal subunit protein bL35 from Streptococcus pneumoniae serotype 2 (strain D39 / NCTC 7466).